The sequence spans 625 residues: Vicilin-like antimicrobial peptides 2-3 (625 aa).

Disordered regions lie at residues 120–152 and 180–212; these read QQKR…QQRE and RQHG…NPYY. Positions 198–212 are enriched in basic and acidic residues; it reads RYEEGEEKQSDNPYY. Cupin type-1 domains are found at residues 230–369 and 414–584; these read SVLE…ERLR and YNLF…KEVE. The interval 594–614 is disordered; it reads IFFPGPRQHQQQSPRSTKQQQ. A compositionally biased stretch (low complexity) spans 601-614; the sequence is QHQQQSPRSTKQQQ.

Belongs to the 7S seed storage protein family.

It is found in the secreted. Its function is as follows. Antimicrobial peptides 2b, 2c and 2d have antibacterial and antifungal activity against a range of species. The sequence is that of Vicilin-like antimicrobial peptides 2-3 from Macadamia integrifolia (Macadamia nut).